We begin with the raw amino-acid sequence, 434 residues long: Glycerol-3-phosphate acyltransferase 3 (434 aa).

The chain crosses the membrane as a helical span at residues 14-34 (WLTLVLGFILLPSVFGVSLGI). Ser-68 and Ser-77 each carry phosphoserine. Helical transmembrane passes span 137–157 (ISLRLTMVWVLGVIVRYCVLL) and 161–181 (VTLAFIGISLLVIGTTLVGQL). Residues 229–234 (HTSPID) carry the HXXXXD motif motif.

The protein belongs to the 1-acyl-sn-glycerol-3-phosphate acyltransferase family. In terms of tissue distribution, widely expressed. Expressed in liver, kidney, testis, brain, heart, skeletal muscle, thyroid, prostate, thymus and placenta. Also expressed lung and adipose tissue.

It is found in the endoplasmic reticulum membrane. It catalyses the reaction sn-glycerol 3-phosphate + an acyl-CoA = a 1-acyl-sn-glycero-3-phosphate + CoA. It carries out the reaction a 1-acyl-sn-glycero-3-phosphate + an acyl-CoA = a 1,2-diacyl-sn-glycero-3-phosphate + CoA. The enzyme catalyses dodecanoyl-CoA + sn-glycerol 3-phosphate = 1-dodecanoyl-sn-glycerol 3-phosphate + CoA. The catalysed reaction is sn-glycerol 3-phosphate + hexadecanoyl-CoA = 1-hexadecanoyl-sn-glycero-3-phosphate + CoA. It catalyses the reaction sn-glycerol 3-phosphate + (9Z)-octadecenoyl-CoA = 1-(9Z-octadecenoyl)-sn-glycero-3-phosphate + CoA. It carries out the reaction (9Z,12Z)-octadecadienoyl-CoA + sn-glycerol 3-phosphate = 1-(9Z,12Z)-octadecadienoyl-sn-glycero-3-phosphate + CoA. The enzyme catalyses 1-tetradecanoyl-sn-glycerol 3-phosphate + (9Z)-octadecenoyl-CoA = 1-tetradecanoyl-2-(9Z)-octadecenoyl-sn-glycero-3-phosphate + CoA. The catalysed reaction is 1-hexadecanoyl-sn-glycero-3-phosphate + (9Z)-octadecenoyl-CoA = 1-hexadecanoyl-2-(9Z-octadecenoyl)-sn-glycero-3-phosphate + CoA. It catalyses the reaction 1-(9Z-octadecenoyl)-sn-glycero-3-phosphate + (9Z)-octadecenoyl-CoA = 1,2-di-(9Z-octadecenoyl)-sn-glycero-3-phosphate + CoA. It carries out the reaction 1-(6Z,9Z,12Z-octadecatrienoyl)-sn-glycero-3-phosphate + (9Z)-octadecenoyl-CoA = (6Z,9Z,12Z)-octadecatrienoyl-2-(9Z)-octadecenoyl-sn-glycero-3-phosphate + CoA. The enzyme catalyses 1-(9Z,12Z,15Z)-octadecatrienoyl-sn-glycero-3-phosphate + (9Z)-octadecenoyl-CoA = 1-(9Z,12Z,15Z)-octadecatrienoyl-2-(9Z)-octadecenoyl-sn-glycero-3-phosphate + CoA. The catalysed reaction is 1-(9Z-octadecenoyl)-sn-glycero-3-phosphate + tetradecanoyl-CoA = 1-(9Z)-octadecenoyl-2-tetradecanoyl-sn-glycero-3-phosphate + CoA. It catalyses the reaction 1-(9Z-octadecenoyl)-sn-glycero-3-phosphate + hexadecanoyl-CoA = 1-(9Z)-octadecenoyl-2-hexadecanoyl-sn-glycero-3-phosphate + CoA. It carries out the reaction 1-(9Z-octadecenoyl)-sn-glycero-3-phosphate + octadecanoyl-CoA = 1-(9Z-octadecenoyl)-2-octadecanoyl-sn-glycero-3-phosphate + CoA. The enzyme catalyses 1-(9Z-octadecenoyl)-sn-glycero-3-phosphate + (9Z,12Z)-octadecadienoyl-CoA = 1-(9Z)-octadecenoyl-2-(9Z,12Z)-octadecadienoyl-sn-glycero-3-phosphate + CoA. The catalysed reaction is 1-(5Z,8Z,11Z,14Z-eicosatetraenoyl)-sn-glycero-3-phosphate + (9Z)-octadecenoyl-CoA = 1-(5Z,8Z,11Z,14Z)-eicosatetraenoyl-2-(9Z)-octadecenoyl-sn-glycero-3-phosphate + CoA. The protein operates within glycerolipid metabolism; triacylglycerol biosynthesis. It participates in phospholipid metabolism; CDP-diacylglycerol biosynthesis; CDP-diacylglycerol from sn-glycerol 3-phosphate: step 1/3. Inhibited by N-ethylmaleimide (NEM). Its function is as follows. Converts glycerol-3-phosphate to 1-acyl-sn-glycerol-3-phosphate (lysophosphatidic acid or LPA) by incorporating an acyl moiety at the sn-1 position of the glycerol backbone. Also converts LPA into 1,2-diacyl-sn-glycerol-3-phosphate (phosphatidic acid or PA) by incorporating an acyl moiety at the sn-2 position of the glycerol backbone. Protects cells against lipotoxicity. This Homo sapiens (Human) protein is Glycerol-3-phosphate acyltransferase 3.